Reading from the N-terminus, the 278-residue chain is Transmembrane protein 41B (278 aa).

The interval 1–31 is disordered; it reads MQVHERSHTGGHTCQCNHGSEKKAPATGKVH. The next 6 membrane-spanning stretches (helical) occupy residues 39–59, 96–116, 132–154, 184–204, 212–232, and 249–269; these read MSLLILVSIFLCAASIMFLVY, FYVEVLVAYFTTYIFLQTFAI, FPLALFLVCLCSGLGASFSYLLS, LINYIIFLRITPFLPNWFINI, PLKVFFLGTFIGVAPPSFVAI, and SWNSVIILMVLAVLSILPAIF. Residues 127–238 form a VTT domain; required for its function in autophagy region; it reads GFLYPFPLAL…FVAIKAGTTL (112 aa).

It belongs to the TMEM41 family.

Its subcellular location is the endoplasmic reticulum membrane. The protein resides in the endomembrane system. It catalyses the reaction a 1,2-diacyl-sn-glycero-3-phospho-L-serine(in) = a 1,2-diacyl-sn-glycero-3-phospho-L-serine(out). The catalysed reaction is cholesterol(in) = cholesterol(out). The enzyme catalyses a 1,2-diacyl-sn-glycero-3-phosphocholine(in) = a 1,2-diacyl-sn-glycero-3-phosphocholine(out). It carries out the reaction a 1,2-diacyl-sn-glycero-3-phosphoethanolamine(in) = a 1,2-diacyl-sn-glycero-3-phosphoethanolamine(out). Functionally, phospholipid scramblase involved in lipid homeostasis and membrane dynamics processes. Has phospholipid scramblase activity toward cholesterol and phosphatidylserine, as well as phosphatidylethanolamine and phosphatidylcholine. Required for autophagosome formation: participates in early stages of autophagosome biogenesis at the endoplasmic reticulum (ER) membrane by reequilibrating the leaflets of the ER as lipids are extracted by atg2 (atg2a or atg2b) to mediate autophagosome assembly. In addition to autophagy, involved in other processes in which phospholipid scramblase activity is required. Required for normal motor neuron development. The sequence is that of Transmembrane protein 41B from Xenopus tropicalis (Western clawed frog).